A 154-amino-acid chain; its full sequence is UPF0178 protein ABC1688 (154 aa).

It belongs to the UPF0178 family.

This chain is UPF0178 protein ABC1688, found in Shouchella clausii (strain KSM-K16) (Alkalihalobacillus clausii).